The chain runs to 276 residues: ADP-dependent (S)-NAD(P)H-hydrate dehydratase (276 aa).

The region spanning 5 to 269 (TPKAMCAWIP…EELPTYLKIF (265 aa)) is the YjeF C-terminal domain. Alanine 40, glycine 103, and histidine 152 together coordinate (6S)-NADPHX. Position 211 (glycine 211) interacts with AMP. Aspartate 212 provides a ligand contact to (6S)-NADPHX.

It belongs to the NnrD/CARKD family. In terms of assembly, homotetramer. Requires Mg(2+) as cofactor.

It catalyses the reaction (6S)-NADHX + ADP = AMP + phosphate + NADH + H(+). It carries out the reaction (6S)-NADPHX + ADP = AMP + phosphate + NADPH + H(+). Functionally, catalyzes the dehydration of the S-form of NAD(P)HX at the expense of ADP, which is converted to AMP. Together with NAD(P)HX epimerase, which catalyzes the epimerization of the S- and R-forms, the enzyme allows the repair of both epimers of NAD(P)HX, a damaged form of NAD(P)H that is a result of enzymatic or heat-dependent hydration. The polypeptide is ADP-dependent (S)-NAD(P)H-hydrate dehydratase (Listeria monocytogenes serovar 1/2a (strain ATCC BAA-679 / EGD-e)).